The chain runs to 263 residues: Indolethylamine N-methyltransferase (263 aa).

N6-succinyllysine is present on Lys13. S-adenosyl-L-methionine-binding positions include Tyr20, Tyr25, Gly63, Tyr69, 85–87 (DFT), and Asn90. Position 96 is an N6-succinyllysine (Lys96). S-adenosyl-L-methionine contacts are provided by residues 142-143 (DV) and Leu163.

The protein belongs to the class I-like SAM-binding methyltransferase superfamily. NNMT/PNMT/TEMT family. In terms of assembly, monomer. Widely expressed. The highest levels were in thyroid, adrenal gland, adult and fetal lung. Intermediate levels in heart, placenta, skeletal muscle, testis, small intestine, pancreas, stomach, spinal cord, lymph node and trachea. Very low levels in adult and fetal kidney and liver, in adult spleen, thymus, ovary, colon and bone marrow. Not expressed in peripheral blood leukocytes and brain.

The protein resides in the cytoplasm. It carries out the reaction a tertiary amine + S-adenosyl-L-methionine = a methylated tertiary amine + S-adenosyl-L-homocysteine + H(+). It catalyses the reaction a secondary amine + S-adenosyl-L-methionine = a methylated secondary amine + S-adenosyl-L-homocysteine + H(+). The catalysed reaction is a primary amine + S-adenosyl-L-methionine = a methylated primary amine + S-adenosyl-L-homocysteine + H(+). The enzyme catalyses dimethyl sulfide + S-adenosyl-L-methionine = trimethylsulfonium + S-adenosyl-L-homocysteine. Functionally, functions as a thioether S-methyltransferase and is active with a variety of thioethers and the corresponding selenium and tellurium compounds, including 3-methylthiopropionaldehyde, dimethyl selenide, dimethyl telluride, 2-methylthioethylamine, 2-methylthioethanol, methyl-n-propyl sulfide and diethyl sulfide. Plays an important role in the detoxification of selenium compounds. Catalyzes the N-methylation of tryptamine and structurally related compounds. The protein is Indolethylamine N-methyltransferase (INMT) of Homo sapiens (Human).